Here is a 161-residue protein sequence, read N- to C-terminus: Deoxyuridine 5'-triphosphate nucleotidohydrolase (161 aa).

Substrate-binding positions include 80 to 82 (RSG), N93, 97 to 99 (TVD), and K107.

This sequence belongs to the dUTPase family. The cofactor is Mg(2+).

The catalysed reaction is dUTP + H2O = dUMP + diphosphate + H(+). It functions in the pathway pyrimidine metabolism; dUMP biosynthesis; dUMP from dCTP (dUTP route): step 2/2. Functionally, this enzyme is involved in nucleotide metabolism: it produces dUMP, the immediate precursor of thymidine nucleotides and it decreases the intracellular concentration of dUTP so that uracil cannot be incorporated into DNA. This Mesorhizobium japonicum (strain LMG 29417 / CECT 9101 / MAFF 303099) (Mesorhizobium loti (strain MAFF 303099)) protein is Deoxyuridine 5'-triphosphate nucleotidohydrolase.